Consider the following 264-residue polypeptide: MTGTPNSRRIDVITVFPEMVEQVARFGVVGRAAERGLIELSAWNPRDYAEDRHATVDDRPYGGGPGMVMKVAPLHRAIQAARAADPRPARVIHLSPQGARLDQDRVARLAACERVIYLCGRYEGIDERLLEAEVDEELSIGDYVLSGGELAAMVAIDAATRLVPGALGHEDSAAEDSFATGLLDHPHYTRPEVYERRGVPEVLRSGDHGAVDTWRLKQALGRTWLRRPDLLAGRELDERQRRLLDEFIAEHRAEARAGNDHDET.

Residues Gly-120 and 140–145 contribute to the S-adenosyl-L-methionine site; that span reads IGDYVL.

Belongs to the RNA methyltransferase TrmD family. Homodimer.

The protein localises to the cytoplasm. It catalyses the reaction guanosine(37) in tRNA + S-adenosyl-L-methionine = N(1)-methylguanosine(37) in tRNA + S-adenosyl-L-homocysteine + H(+). Functionally, specifically methylates guanosine-37 in various tRNAs. The sequence is that of tRNA (guanine-N(1)-)-methyltransferase from Halorhodospira halophila (strain DSM 244 / SL1) (Ectothiorhodospira halophila (strain DSM 244 / SL1)).